The sequence spans 233 residues: Synaptogyrin-4 (233 aa).

The region spanning 18 to 169 (FLRRPKSISR…QAYLAFQDLR (152 aa)) is the MARVEL domain. 4 helical membrane-spanning segments follow: residues 25–45 (ISRIFGGVFSLVIFSSLLTDG), 66–86 (CSFAVGAGFLSFLSCLVFLAI), 104–124 (LLDFILAVLWAGVWFVAFCFL), and 145–165 (AAIALSFFSVPVWILQAYLAF). The interval 191–233 (SPSSTSPSNPPITGPNSLSYTSSALSPYMTTPKAPRLAMMPDS) is disordered. A compositionally biased stretch (polar residues) spans 204–219 (GPNSLSYTSSALSPYM).

It belongs to the synaptogyrin family.

It localises to the membrane. The chain is Synaptogyrin-4 (Syngr4) from Mus musculus (Mouse).